The following is a 348-amino-acid chain: Phospho-2-dehydro-3-deoxyheptonate aldolase, Trp-sensitive (348 aa).

This sequence belongs to the class-I DAHP synthase family.

It carries out the reaction D-erythrose 4-phosphate + phosphoenolpyruvate + H2O = 7-phospho-2-dehydro-3-deoxy-D-arabino-heptonate + phosphate. It functions in the pathway metabolic intermediate biosynthesis; chorismate biosynthesis; chorismate from D-erythrose 4-phosphate and phosphoenolpyruvate: step 1/7. Functionally, stereospecific condensation of phosphoenolpyruvate (PEP) and D-erythrose-4-phosphate (E4P) giving rise to 3-deoxy-D-arabino-heptulosonate-7-phosphate (DAHP). This is Phospho-2-dehydro-3-deoxyheptonate aldolase, Trp-sensitive (aroH) from Shigella flexneri.